Consider the following 594-residue polypeptide: DNA mismatch repair protein MutL (594 aa).

It belongs to the DNA mismatch repair MutL/HexB family.

Its function is as follows. This protein is involved in the repair of mismatches in DNA. It is required for dam-dependent methyl-directed DNA mismatch repair. May act as a 'molecular matchmaker', a protein that promotes the formation of a stable complex between two or more DNA-binding proteins in an ATP-dependent manner without itself being part of a final effector complex. The polypeptide is DNA mismatch repair protein MutL (Rhizorhabdus wittichii (strain DSM 6014 / CCUG 31198 / JCM 15750 / NBRC 105917 / EY 4224 / RW1) (Sphingomonas wittichii)).